The primary structure comprises 356 residues: CLIP domain-containing serine protease C9 (356 aa).

One can recognise a Clip domain in the interval Ser49–Cys94. Intrachain disulfides connect Cys50-Cys93, Cys60-Cys83, Cys66-Cys94, and Cys139-Cys155. N-linked (GlcNAc...) asparagine glycosylation occurs at Asn62. The Peptidase S1 domain maps to Ile109–Ser351. Active-site charge relay system residues include His154 and Asp194. A disulfide bond links Cys258 and Cys284. The N-linked (GlcNAc...) asparagine glycan is linked to Asn292. Residues Cys300 and Cys328 are joined by a disulfide bond. Catalysis depends on Ser304, which acts as the Charge relay system.

This sequence belongs to the peptidase S1 family. CLIP subfamily. In terms of assembly, in the active form, heterodimer of a p12 subunit and a p30 subunit; disulfide-linked. Post-translationally, secreted as a full-length protein. Following bacterium E.coli infection, proteolytically cleaved into two chains, p12 and p30, which remain covalently linked.

The protein resides in the secreted. Its function is as follows. Probable serine protease which plays an essential role in the innate immune response against bacteria and protozoa infection by activating the melanization cascade. In the susceptible strain G3, appears to be dispensable for ookinete elimination which occurs by lysis. This Anopheles gambiae (African malaria mosquito) protein is CLIP domain-containing serine protease C9.